The primary structure comprises 413 residues: Tyrosine--tRNA ligase (413 aa).

The short motif at 55–64 (PTRPDLHLGH) is the 'HIGH' region element. The 'KMSKS' region signature appears at 242–246 (KMSKS). Residue Lys245 participates in ATP binding. Residues 346–410 (VKLSYILREC…GKKAFRRLVK (65 aa)) enclose the S4 RNA-binding domain.

This sequence belongs to the class-I aminoacyl-tRNA synthetase family. TyrS type 2 subfamily. As to quaternary structure, homodimer.

It localises to the cytoplasm. The catalysed reaction is tRNA(Tyr) + L-tyrosine + ATP = L-tyrosyl-tRNA(Tyr) + AMP + diphosphate + H(+). Its function is as follows. Catalyzes the attachment of tyrosine to tRNA(Tyr) in a two-step reaction: tyrosine is first activated by ATP to form Tyr-AMP and then transferred to the acceptor end of tRNA(Tyr). The chain is Tyrosine--tRNA ligase from Synechococcus sp. (strain JA-2-3B'a(2-13)) (Cyanobacteria bacterium Yellowstone B-Prime).